The chain runs to 166 residues: uncharacterized protein (166 aa).

This is an uncharacterized protein from Orgyia pseudotsugata (Douglas-fir tussock moth).